Here is a 118-residue protein sequence, read N- to C-terminus: MAEQITSARATAKIVRVAPRKARLVLDTIRRKSVNEAYAILKFLPNTSTEDIYKVLNSAVANAENNFSLDREDLIVKEAFANEGPTLKRFRPRAKGSASPINKRTSHITIVVAEKEAK.

The protein belongs to the universal ribosomal protein uL22 family. As to quaternary structure, part of the 50S ribosomal subunit.

Its function is as follows. This protein binds specifically to 23S rRNA; its binding is stimulated by other ribosomal proteins, e.g. L4, L17, and L20. It is important during the early stages of 50S assembly. It makes multiple contacts with different domains of the 23S rRNA in the assembled 50S subunit and ribosome. The globular domain of the protein is located near the polypeptide exit tunnel on the outside of the subunit, while an extended beta-hairpin is found that lines the wall of the exit tunnel in the center of the 70S ribosome. The chain is Large ribosomal subunit protein uL22 from Leuconostoc citreum (strain KM20).